The sequence spans 302 residues: Sulfate adenylyltransferase subunit 2 (302 aa).

The protein belongs to the PAPS reductase family. CysD subfamily. As to quaternary structure, heterodimer composed of CysD, the smaller subunit, and CysN.

The enzyme catalyses sulfate + ATP + H(+) = adenosine 5'-phosphosulfate + diphosphate. It participates in sulfur metabolism; hydrogen sulfide biosynthesis; sulfite from sulfate: step 1/3. With CysN forms the ATP sulfurylase (ATPS) that catalyzes the adenylation of sulfate producing adenosine 5'-phosphosulfate (APS) and diphosphate, the first enzymatic step in sulfur assimilation pathway. APS synthesis involves the formation of a high-energy phosphoric-sulfuric acid anhydride bond driven by GTP hydrolysis by CysN coupled to ATP hydrolysis by CysD. The sequence is that of Sulfate adenylyltransferase subunit 2 from Salmonella schwarzengrund (strain CVM19633).